A 156-amino-acid polypeptide reads, in one-letter code: Small ribosomal subunit protein uS7 (156 aa).

It belongs to the universal ribosomal protein uS7 family. In terms of assembly, part of the 30S ribosomal subunit. Contacts proteins S9 and S11.

In terms of biological role, one of the primary rRNA binding proteins, it binds directly to 16S rRNA where it nucleates assembly of the head domain of the 30S subunit. Is located at the subunit interface close to the decoding center, probably blocks exit of the E-site tRNA. In Lactobacillus acidophilus (strain ATCC 700396 / NCK56 / N2 / NCFM), this protein is Small ribosomal subunit protein uS7.